The sequence spans 128 residues: Ribonuclease P protein component (128 aa).

The protein belongs to the RnpA family. As to quaternary structure, consists of a catalytic RNA component (M1 or rnpB) and a protein subunit.

It catalyses the reaction Endonucleolytic cleavage of RNA, removing 5'-extranucleotides from tRNA precursor.. Functionally, RNaseP catalyzes the removal of the 5'-leader sequence from pre-tRNA to produce the mature 5'-terminus. It can also cleave other RNA substrates such as 4.5S RNA. The protein component plays an auxiliary but essential role in vivo by binding to the 5'-leader sequence and broadening the substrate specificity of the ribozyme. The sequence is that of Ribonuclease P protein component from Prochlorococcus marinus (strain MIT 9313).